The chain runs to 739 residues: DNA ligase (739 aa).

34–38 (DADYD) is a binding site for NAD(+). Basic and acidic residues predominate over residues 49-59 (ARFPHLKRPDS). The segment at 49–70 (ARFPHLKRPDSPSEQVGARPGE) is disordered. NAD(+)-binding positions include 83–84 (SL) and glutamate 117. Lysine 119 serves as the catalytic N6-AMP-lysine intermediate. The NAD(+) site is built by arginine 140, glutamate 175, lysine 291, and lysine 315. 4 residues coordinate Zn(2+): cysteine 420, cysteine 423, cysteine 438, and cysteine 444. The 80-residue stretch at 660 to 739 (ARDSPVAGKT…DGWLKLIEGL (80 aa)) folds into the BRCT domain.

This sequence belongs to the NAD-dependent DNA ligase family. LigA subfamily. It depends on Mg(2+) as a cofactor. Mn(2+) serves as cofactor.

The enzyme catalyses NAD(+) + (deoxyribonucleotide)n-3'-hydroxyl + 5'-phospho-(deoxyribonucleotide)m = (deoxyribonucleotide)n+m + AMP + beta-nicotinamide D-nucleotide.. DNA ligase that catalyzes the formation of phosphodiester linkages between 5'-phosphoryl and 3'-hydroxyl groups in double-stranded DNA using NAD as a coenzyme and as the energy source for the reaction. It is essential for DNA replication and repair of damaged DNA. The sequence is that of DNA ligase from Ruegeria pomeroyi (strain ATCC 700808 / DSM 15171 / DSS-3) (Silicibacter pomeroyi).